The sequence spans 611 residues: Leucine aminopeptidase 2 (611 aa).

A peptide contacts are provided by residues 135-137 and 265-270; these read QCQ and PYGGME. His-294 contributes to the Zn(2+) binding site. The active-site Proton acceptor is the Glu-295. The Zn(2+) site is built by His-298 and Glu-317. The active-site Proton donor is Tyr-383.

Belongs to the peptidase M1 family. The cofactor is Zn(2+).

Its subcellular location is the cytoplasm. The protein localises to the nucleus. It carries out the reaction an epoxide + H2O = an ethanediol. Aminopeptidase that preferentially cleaves di- and tripeptides. Also has low epoxide hydrolase activity (in vitro). Can hydrolyze the epoxide leukotriene LTA(4) but it forms preferentially 5,6-dihydroxy-7,9,11,14-eicosatetraenoic acid rather than the cytokine leukotriene B(4) as the product compared to the homologous mammalian enzyme (in vitro). This is Leucine aminopeptidase 2 from Chaetomium globosum (strain ATCC 6205 / CBS 148.51 / DSM 1962 / NBRC 6347 / NRRL 1970) (Soil fungus).